The following is a 179-amino-acid chain: Large ribosomal subunit protein uL5 (179 aa).

This sequence belongs to the universal ribosomal protein uL5 family. As to quaternary structure, part of the 50S ribosomal subunit; part of the 5S rRNA/L5/L18/L25 subcomplex. Contacts the 5S rRNA and the P site tRNA. Forms a bridge to the 30S subunit in the 70S ribosome.

Its function is as follows. This is one of the proteins that bind and probably mediate the attachment of the 5S RNA into the large ribosomal subunit, where it forms part of the central protuberance. In the 70S ribosome it contacts protein S13 of the 30S subunit (bridge B1b), connecting the 2 subunits; this bridge is implicated in subunit movement. Contacts the P site tRNA; the 5S rRNA and some of its associated proteins might help stabilize positioning of ribosome-bound tRNAs. The protein is Large ribosomal subunit protein uL5 of Pasteurella multocida (strain Pm70).